Consider the following 261-residue polypeptide: Large ribosomal subunit protein uL3 (261 aa).

A compositionally biased stretch (low complexity) spans 138–148 (SVSHRSHGSTG). 2 disordered regions span residues 138–163 (SVSHRSHGSTGQRQDPGRTFPGKKMA) and 214–261 (ADAP…GDQA). Residue Q151 is modified to N5-methylglutamine. Over residues 227 to 261 (APTPVEAAADEAAPAEEPAVTEAPAAEATEAGDQA) the composition is skewed to low complexity.

This sequence belongs to the universal ribosomal protein uL3 family. Part of the 50S ribosomal subunit. Forms a cluster with proteins L14 and L19. In terms of processing, methylated by PrmB.

Functionally, one of the primary rRNA binding proteins, it binds directly near the 3'-end of the 23S rRNA, where it nucleates assembly of the 50S subunit. In Phenylobacterium zucineum (strain HLK1), this protein is Large ribosomal subunit protein uL3.